The primary structure comprises 853 residues: Thrombospondin type-1 domain-containing protein 1 (853 aa).

A signal peptide spans 1 to 24; it reads MKPMLKDFSNLLLVVLCDYVLGEA. Residues 25–414 lie on the Extracellular side of the membrane; it reads EYLLLREPGH…QPQGPVKSNN (390 aa). N-linked (GlcNAc...) asparagine glycans are attached at residues Asn39, Asn53, Asn58, Asn69, Asn80, Asn135, and Asn304. The region spanning 341-394 is the TSP type-1 domain; that stretch reads IETWGLWQPWSQCSATCGDGVRERRRVCLTSFPSRPGCPGMSLEASLCSLEECA. Disulfide bonds link Cys353/Cys388, Cys357/Cys393, and Cys368/Cys378. A helical membrane pass occupies residues 415–435; it reads IVTVTGISLCLFIIIATVLIT. Over 436–853 the chain is Cytoplasmic; sequence LWRRFGRPAK…STLSVEKLVI (418 aa). Disordered regions lie at residues 445–518, 624–650, 668–702, and 714–800; these read KCST…ESFQ, TLIRKSQARHVGSRGGPSERSHARNAH, ERSMSTLTPRQAPAYSTRTRTCEQAEDRFRPQSRG, and QEAS…RKDK. Residue Ser464 is modified to Phosphoserine. Polar residues predominate over residues 671-686; sequence MSTLTPRQAPAYSTRT. The segment covering 687 to 697 has biased composition (basic and acidic residues); sequence RTCEQAEDRFR. Residues 767-795 are compositionally biased toward polar residues; it reads SHKSVSRKQSSPTSPKDSYQRVSPLSPSQ.

As to quaternary structure, part of a complex composed of THSD1, PTK2/FAK1, TLN1 and VCL. Interacts with TLN1.

Its subcellular location is the endosome membrane. The protein localises to the cell junction. It localises to the focal adhesion. Its function is as follows. Is a positive regulator of nascent focal adhesion assembly, involved in the modulation of endothelial cell attachment to the extracellular matrix. The sequence is that of Thrombospondin type-1 domain-containing protein 1 (THSD1) from Pongo abelii (Sumatran orangutan).